A 162-amino-acid polypeptide reads, in one-letter code: Beta-lactoglobulin-3 (162 aa).

2 disulfide bridges follow: Cys-66/Cys-160 and Cys-106/Cys-119.

Belongs to the calycin superfamily. Lipocalin family. As to quaternary structure, monomer.

The protein localises to the secreted. Functionally, lactoglobulin is the primary component of whey, it binds retinol and is probably involved in the transport of that molecule. This is Beta-lactoglobulin-3 (LGB3) from Felis catus (Cat).